We begin with the raw amino-acid sequence, 133 residues long: Histone H2A (133 aa).

Positions 1–10 are enriched in gly residues; that stretch reads MTGGKSGGKA. Positions 1–24 are disordered; it reads MTGGKSGGKASGSKNAQSRSSKAG. Residues Lys5 and Lys9 each carry the N6-acetyllysine modification. Gln106 carries the N5-methylglutamine modification. Ser130 carries the phosphoserine modification. The short motif at 130 to 131 is the [ST]-Q motif element; it reads SQ.

Belongs to the histone H2A family. In terms of assembly, the nucleosome is a histone octamer containing two molecules each of H2A, H2B, H3 and H4 assembled in one H3-H4 heterotetramer and two H2A-H2B heterodimers. The octamer wraps approximately 147 bp of DNA. Post-translationally, phosphorylated to form H2AS128ph (gamma-H2A) in response to DNA double-strand breaks (DSBs) generated by exogenous genotoxic agents and by stalled replication forks. Phosphorylation is dependent on the DNA damage checkpoint kinases mec1/ATR and tel1/ATM, spreads on either side of a detected DSB site and may mark the surrounding chromatin for recruitment of proteins required for DNA damage signaling and repair. Gamma-H2A is removed from the DNA prior to the strand invasion-primer extension step of the repair process and subsequently dephosphorylated. Dephosphorylation is necessary for efficient recovery from the DNA damage checkpoint. Acetylated by esa1 to form H2AK4ac and H2AK7ac.

The protein resides in the nucleus. It localises to the chromosome. In terms of biological role, core component of nucleosome which plays a central role in DNA double strand break (DSB) repair. Nucleosomes wrap and compact DNA into chromatin, limiting DNA accessibility to the cellular machineries which require DNA as a template. Histones thereby play a central role in transcription regulation, DNA repair, DNA replication and chromosomal stability. DNA accessibility is regulated via a complex set of post-translational modifications of histones, also called histone code, and nucleosome remodeling. The chain is Histone H2A (hta1) from Aspergillus clavatus (strain ATCC 1007 / CBS 513.65 / DSM 816 / NCTC 3887 / NRRL 1 / QM 1276 / 107).